Reading from the N-terminus, the 65-residue chain is Putative potassium channel toxin Ts21 (65 aa).

An N-terminal signal peptide occupies residues 1 to 25; it reads MNKVYLVAILVLSVLLVANVSPIEG. 3 disulfides stabilise this stretch: Cys-31–Cys-53, Cys-38–Cys-61, and Cys-42–Cys-63.

This sequence belongs to the short scorpion toxin superfamily. Potassium channel inhibitor family. Alpha-KTx 11 subfamily. As to expression, expressed by the venom gland.

It is found in the secreted. Its function is as follows. This recombinant toxin inhibits the mammalian voltage-gated potassium channels Kv1.3/KCNA3 in vitro with an IC(50) of 26.40 nM. The chain is Putative potassium channel toxin Ts21 from Tityus serrulatus (Brazilian scorpion).